A 206-amino-acid polypeptide reads, in one-letter code: MSFFGGNKKTPEQELKDSKRELSKGQREMDRELNRLKIVEQEYIGKIKQLAKAGRNDEAKRMANDLVKLRGQMERMRATKTTLSAVSTKTTTIKANQTMANAMASATKAMSTMNKQTDLVQLQKTMMEYEKQTQRVEMTEEMMQDMFEDDEVDEEADDILSKVVDEVCLDNYQKMPSVAQKDLPYSSKTSTFKTEDEELNKLLQSL.

Residues 1–32 (MSFFGGNKKTPEQELKDSKRELSKGQREMDRE) form a disordered region. The segment covering 9 to 32 (KTPEQELKDSKRELSKGQREMDRE) has biased composition (basic and acidic residues). 2 coiled-coil regions span residues 12–80 (EQEL…RATK) and 114–148 (NKQTDLVQLQKTMMEYEKQTQRVEMTEEMMQDMFE).

It belongs to the SNF7 family. Probable core component of the endosomal sorting required for transport complex III (ESCRT-III). ESCRT-III components are thought to multimerize to form a flat lattice on the perimeter membrane of the endosome.

The protein resides in the endosome membrane. Functionally, probable core component of the endosomal sorting required for transport complex III (ESCRT-III) which is involved in multivesicular bodies (MVBs) formation and sorting of endosomal cargo proteins into MVBs. MVBs contain intraluminal vesicles (ILVs) that are generated by invagination and scission from the limiting membrane of the endosome and are delivered to lysosomes enabling degradation of membrane proteins. This chain is Charged multivesicular body protein 2a homolog 1 (chmp2a1), found in Dictyostelium discoideum (Social amoeba).